A 317-amino-acid chain; its full sequence is Transaldolase (317 aa).

K132 serves as the catalytic Schiff-base intermediate with substrate.

This sequence belongs to the transaldolase family. Type 1 subfamily. In terms of assembly, homodimer.

It localises to the cytoplasm. The catalysed reaction is D-sedoheptulose 7-phosphate + D-glyceraldehyde 3-phosphate = D-erythrose 4-phosphate + beta-D-fructose 6-phosphate. The protein operates within carbohydrate degradation; pentose phosphate pathway; D-glyceraldehyde 3-phosphate and beta-D-fructose 6-phosphate from D-ribose 5-phosphate and D-xylulose 5-phosphate (non-oxidative stage): step 2/3. Its function is as follows. Transaldolase is important for the balance of metabolites in the pentose-phosphate pathway. The sequence is that of Transaldolase from Shigella dysenteriae serotype 1 (strain Sd197).